A 441-amino-acid polypeptide reads, in one-letter code: MSEREVSTAPAGTDMPAAKKQKLSSDENSNPDLSGDENDDAVSIESGTNTERPDTPTNTPNAPGRKSWGKGKWKSKKCKYSFKCVNSLKEDHNQPLFGVQFNWHSKEGDPLVFATVGSNRVTLYECHSQGEIRLLQSYVDADADENFYTCAWTYDSNTSHPLLAVAGSRGIIRIINPITMQCIKHYVGHGNAINELKFHPRDPNLLLSVSKDHALRLWNIQTDTLVAIFGGVEGHRDEVLSADYDLLGEKIMSCGMDHSLKLWRINSKRMMNAIKESYDYNPNKTNRPFISQKIHFPDFSTRDIHRNYVDCVRWLGDLILSKSCENAIVCWKPGKMEDDIDKIKPSESNVTILGRFDYSQCDIWYMRFSMDFWQKMLALGNQVGKLYVWDLEVEDPHKAKCTTLTHHKCGAAIRQTSFSRDSSILIAVCDDASIWRWDRLR.

The segment at 1–72 (MSEREVSTAP…PGRKSWGKGK (72 aa)) is disordered. An N-acetylserine modification is found at Ser2. Ser2 and Ser34 each carry phosphoserine. Residues 45-61 (ESGTNTERPDTPTNTPN) are compositionally biased toward polar residues. At Thr55 the chain carries Phosphothreonine. Lys66 carries the post-translational modification N6,N6,N6-trimethyllysine; alternate. Lys66 carries the post-translational modification N6,N6-dimethyllysine; alternate. Lys66 carries the N6-methyllysine; alternate modification. The interval 81-441 (SFKCVNSLKE…ASIWRWDRLR (361 aa)) is interaction with EZH2. WD repeat units follow at residues 91–134 (DHNQ…EIRL), 142–185 (DADE…CIKH), 188–228 (GHGN…LVAI), and 234–275 (GHRD…NAIK). Required for interaction with the matrix protein MA of HIV-1 stretches follow at residues 149-303 (TCAW…STRD) and 301-441 (TRDI…DRLR). Residues Lys197, Lys268, and Lys284 each carry the N6,N6,N6-trimethyllysine; alternate modification. N6,N6-dimethyllysine; alternate occurs at positions 197, 268, and 284. An N6-methyllysine; alternate mark is found at Lys197, Lys268, and Lys284. WD repeat units follow at residues 304-341 (IHRNYVDCVRWLGDLILSKSCENAIVCWKPGKMEDDID), 359-399 (SQCD…PHKA), and 408-441 (KCGAAIRQTSFSRDSSILIAVCDDASIWRWDRLR).

This sequence belongs to the WD repeat ESC family. As to quaternary structure, component of the PRC2/EED-EZH2 complex, which includes EED, EZH2, SUZ12, RBBP4 and RBBP7 and possibly AEBP2. The minimum components required for methyltransferase activity of the PRC2/EED-EZH2 complex are EED, EZH2 and SUZ12. Component of the PRC2/EED-EZH1 complex, which includes EED, EZH1, SUZ12, RBBP4 and AEBP2. The PRC2 complex may also interact with DNMT1, DNMT3A, DNMT3B and PHF1 via the EZH2 subunit and with SIRT1 via the SUZ12 subunit. Interacts with HDAC, HDAC2, histone H1 and YY1. May interact with ITGA4, ITGAE and ITGB7. Interacts with CDYL. Interacts with BMAL1. Interacts with KMT2A/MLL1. (Microbial infection) May interact with the MA protein of HIV-1. In terms of processing, methylated. Binding to histone H1 'Lys-26' promotes mono-, di-, and trimethylation of internal lysines. In terms of tissue distribution, expressed in brain, colon, heart, kidney, liver, lung, muscle, ovary, peripheral blood leukocytes, pancreas, placenta, prostate, spleen, small intestine, testis, thymus and uterus. Appears to be overexpressed in breast and colon cancer.

The protein localises to the nucleus. The protein resides in the chromosome. Its function is as follows. Polycomb group (PcG) protein. Component of the PRC2/EED-EZH2 complex, which methylates 'Lys-9' and 'Lys-27' of histone H3, leading to transcriptional repression of the affected target gene. Also recognizes 'Lys-26' trimethylated histone H1 with the effect of inhibiting PRC2 complex methyltransferase activity on nucleosomal histone H3 'Lys-27', whereas H3 'Lys-27' recognition has the opposite effect, enabling the propagation of this repressive mark. The PRC2/EED-EZH2 complex may also serve as a recruiting platform for DNA methyltransferases, thereby linking two epigenetic repression systems. Genes repressed by the PRC2/EED-EZH2 complex include HOXC8, HOXA9, MYT1 and CDKN2A. The sequence is that of Polycomb protein EED from Homo sapiens (Human).